We begin with the raw amino-acid sequence, 340 residues long: MEPDRTQIRLDPRYTADLLEILKTNYSVPSACFSYPPTAAQLLRALGPVDISLMVIMTLFVLGSIAIFLEAAVYLHKNTRCPIKRKTLIWCSSSPTIVSAFSCFGLWIPRALTLVEMAITTFYSMCFYLLMQAMVEGFGGKEAVLRTLKDTPVMIHTGPCCCCCPCCPRIKITRKRLQLLLLGPIQYAFFKISLTLVGLFLIPDGIFDPSDISEGSTALWINTFLGVSTLSALWTIGIIFRQARLHLGEQNIGAKFVLFQALLILSALQPSIFSVLASGGQIACSPPFSSKIRSQVMNCHLLILESFLITVLTRIYYRRKDDKLGYEPFSSPDQDLNLKA.

Residues 1–52 (MEPDRTQIRLDPRYTADLLEILKTNYSVPSACFSYPPTAAQLLRALGPVDIS) are Extracellular-facing. Asn25 is a glycosylation site (N-linked (GlcNAc...) asparagine). Residues 53-73 (LMVIMTLFVLGSIAIFLEAAV) form a helical membrane-spanning segment. At 74-87 (YLHKNTRCPIKRKT) the chain is on the cytoplasmic side. Residues 88-108 (LIWCSSSPTIVSAFSCFGLWI) form a helical membrane-spanning segment. Over 109 to 110 (PR) the chain is Extracellular. Residues 111–131 (ALTLVEMAITTFYSMCFYLLM) traverse the membrane as a helical segment. Over 132–186 (QAMVEGFGGKEAVLRTLKDTPVMIHTGPCCCCCPCCPRIKITRKRLQLLLLGPIQ) the chain is Cytoplasmic. Residues 187 to 207 (YAFFKISLTLVGLFLIPDGIF) traverse the membrane as a helical segment. At 208–219 (DPSDISEGSTAL) the chain is on the extracellular side. Residues 220–240 (WINTFLGVSTLSALWTIGIIF) form a helical membrane-spanning segment. Residues 241–255 (RQARLHLGEQNIGAK) lie on the Cytoplasmic side of the membrane. Residues 256–276 (FVLFQALLILSALQPSIFSVL) traverse the membrane as a helical segment. The Extracellular portion of the chain corresponds to 277-295 (ASGGQIACSPPFSSKIRSQ). The chain crosses the membrane as a helical span at residues 296-316 (VMNCHLLILESFLITVLTRIY). Residues 317–340 (YRRKDDKLGYEPFSSPDQDLNLKA) lie on the Cytoplasmic side of the membrane. Ser330 bears the Phosphoserine mark.

This sequence belongs to the OST-alpha family. In terms of assembly, interacts with SLC51B. The Ost-alpha/Ost-beta complex is a heterodimer composed of alpha (SLC51A) and beta (SLC51B) subunit.

It localises to the cell membrane. The protein localises to the endoplasmic reticulum membrane. The catalysed reaction is taurocholate(out) = taurocholate(in). It carries out the reaction estrone 3-sulfate(out) = estrone 3-sulfate(in). The enzyme catalyses dehydroepiandrosterone 3-sulfate(out) = dehydroepiandrosterone 3-sulfate(in). It catalyses the reaction tauroursodeoxycholate(out) = tauroursodeoxycholate(in). The catalysed reaction is glycoursodeoxycholate(out) = glycoursodeoxycholate(in). It carries out the reaction glycocholate(out) = glycocholate(in). The enzyme catalyses taurochenodeoxycholate(out) = taurochenodeoxycholate(in). It catalyses the reaction glycochenodeoxycholate(out) = glycochenodeoxycholate(in). The catalysed reaction is taurodeoxycholate(out) = taurodeoxycholate(in). It carries out the reaction glycodeoxycholate(out) = glycodeoxycholate(in). The enzyme catalyses prostaglandin E2(out) = prostaglandin E2(in). Functionally, essential component of the Ost-alpha/Ost-beta complex, a heterodimer that acts as the intestinal basolateral transporter responsible for bile acid export from enterocytes into portal blood. Efficiently transports the major species of bile acids (taurocholate). Taurine conjugates are transported more efficiently across the basolateral membrane than glycine-conjugated bile acids. Can also transport steroids such as estrone 3-sulfate and dehydroepiandrosterone 3-sulfate, therefore playing a role in the enterohepatic circulation of sterols. Able to transport eicosanoids such as prostaglandin E2. The chain is Organic solute transporter subunit alpha (SLC51A) from Bos taurus (Bovine).